A 233-amino-acid polypeptide reads, in one-letter code: Purine nucleoside phosphorylase DeoD-type (233 aa).

His4 is a binding site for a purine D-ribonucleoside. Residues Gly20, Arg24, Arg43, and 87-90 (RVGT) each bind phosphate. Residues Glu162, 179–181 (EME), and 203–204 (SD) contribute to the a purine D-ribonucleoside site. The Proton donor role is filled by Asp204.

This sequence belongs to the PNP/UDP phosphorylase family. Homohexamer; trimer of homodimers.

It catalyses the reaction a purine D-ribonucleoside + phosphate = a purine nucleobase + alpha-D-ribose 1-phosphate. The catalysed reaction is a purine 2'-deoxy-D-ribonucleoside + phosphate = a purine nucleobase + 2-deoxy-alpha-D-ribose 1-phosphate. In terms of biological role, catalyzes the reversible phosphorolytic breakdown of the N-glycosidic bond in the beta-(deoxy)ribonucleoside molecules, with the formation of the corresponding free purine bases and pentose-1-phosphate. The protein is Purine nucleoside phosphorylase DeoD-type of Alkaliphilus metalliredigens (strain QYMF).